The following is a 420-amino-acid chain: Serine hydroxymethyltransferase (420 aa).

Residues leucine 121 and 125–127 (GHL) contribute to the (6S)-5,6,7,8-tetrahydrofolate site. Lysine 230 is modified (N6-(pyridoxal phosphate)lysine). (6S)-5,6,7,8-tetrahydrofolate-binding positions include glutamate 246 and 354–356 (SPF).

The protein belongs to the SHMT family. Homodimer. Requires pyridoxal 5'-phosphate as cofactor.

The protein resides in the cytoplasm. It catalyses the reaction (6R)-5,10-methylene-5,6,7,8-tetrahydrofolate + glycine + H2O = (6S)-5,6,7,8-tetrahydrofolate + L-serine. It functions in the pathway one-carbon metabolism; tetrahydrofolate interconversion. It participates in amino-acid biosynthesis; glycine biosynthesis; glycine from L-serine: step 1/1. Its function is as follows. Catalyzes the reversible interconversion of serine and glycine with tetrahydrofolate (THF) serving as the one-carbon carrier. This reaction serves as the major source of one-carbon groups required for the biosynthesis of purines, thymidylate, methionine, and other important biomolecules. Also exhibits THF-independent aldolase activity toward beta-hydroxyamino acids, producing glycine and aldehydes, via a retro-aldol mechanism. The sequence is that of Serine hydroxymethyltransferase from Rickettsia peacockii (strain Rustic).